Consider the following 161-residue polypeptide: Large ribosomal subunit protein uL11 (161 aa).

This sequence belongs to the universal ribosomal protein uL11 family. As to quaternary structure, part of the ribosomal stalk of the 50S ribosomal subunit. Interacts with L10 and the large rRNA to form the base of the stalk. L10 forms an elongated spine to which L12 dimers bind in a sequential fashion forming a multimeric L10(L12)X complex.

Functionally, forms part of the ribosomal stalk which helps the ribosome interact with GTP-bound translation factors. In Methanosarcina mazei (strain ATCC BAA-159 / DSM 3647 / Goe1 / Go1 / JCM 11833 / OCM 88) (Methanosarcina frisia), this protein is Large ribosomal subunit protein uL11.